Reading from the N-terminus, the 846-residue chain is Protein kintoun (846 aa).

Disordered regions lie at residues 1–21, 377–412, 581–657, and 743–846; these read MSTA…ERAD, DSGV…PPDP, HTSI…DSTI, and HDSS…DDEI. Serine 378 bears the Phosphoserine mark. A compositionally biased stretch (low complexity) spans 399-408; sequence PETPELETAA. Basic residues-rich tracts occupy residues 596-612 and 750-766; these read LHKK…KKQR and QRKK…RAQQ. Residue serine 770 is modified to Phosphoserine. Residues 821 to 832 are compositionally biased toward basic and acidic residues; sequence TRQDHADADAKN.

It belongs to the PIH1 family. Kintoun subfamily. As to quaternary structure, interacts with Pp1alpha-96A, Pp1-87B, Pp1-13C and flw.

It is found in the cytoplasm. Its function is as follows. Required for cytoplasmic pre-assembly of axonemal dyneins, thereby playing a central role in motility in cilia and flagella. Involved in pre-assembly of dynein arm complexes in the cytoplasm before intraflagellar transport loads them for the ciliary compartment. The polypeptide is Protein kintoun (Drosophila pseudoobscura pseudoobscura (Fruit fly)).